The sequence spans 273 residues: Putative pyruvate, phosphate dikinase regulatory protein (273 aa).

153-160 (GISRTSKT) provides a ligand contact to ADP.

It belongs to the pyruvate, phosphate/water dikinase regulatory protein family. PDRP subfamily.

It carries out the reaction N(tele)-phospho-L-histidyl/L-threonyl-[pyruvate, phosphate dikinase] + ADP = N(tele)-phospho-L-histidyl/O-phospho-L-threonyl-[pyruvate, phosphate dikinase] + AMP + H(+). The enzyme catalyses N(tele)-phospho-L-histidyl/O-phospho-L-threonyl-[pyruvate, phosphate dikinase] + phosphate + H(+) = N(tele)-phospho-L-histidyl/L-threonyl-[pyruvate, phosphate dikinase] + diphosphate. In terms of biological role, bifunctional serine/threonine kinase and phosphorylase involved in the regulation of the pyruvate, phosphate dikinase (PPDK) by catalyzing its phosphorylation/dephosphorylation. This Rhizobium etli (strain ATCC 51251 / DSM 11541 / JCM 21823 / NBRC 15573 / CFN 42) protein is Putative pyruvate, phosphate dikinase regulatory protein.